The primary structure comprises 364 residues: BOLA class I histocompatibility antigen, alpha chain BL3-7 (364 aa).

The N-terminal stretch at 1 to 27 is a signal peptide; it reads MRVMRVMRPRTLLLLLSGVLVLTETLA. Residues 28–117 are alpha-1; that stretch reads GSHSLRYFYT…LRGYYNQSET (90 aa). The Extracellular portion of the chain corresponds to 28 to 310; the sequence is GSHSLRYFYT…WEPPQTSFLI (283 aa). Residue N113 is glycosylated (N-linked (GlcNAc...) asparagine). The interval 118-209 is alpha-2; sequence GSHNIQAMYG…ENGKDTLLRA (92 aa). 2 disulfide bridges follow: C128–C191 and C230–C286. The interval 210–301 is alpha-3; that stretch reads DPPKAHVTHH…GLQEPLTLRW (92 aa). The region spanning 212-298 is the Ig-like C1-type domain; the sequence is PKAHVTHHSI…QHEGLQEPLT (87 aa). The segment at 302–310 is connecting peptide; it reads EPPQTSFLI. The chain crosses the membrane as a helical span at residues 311 to 331; it reads MGIIVGLVLLVVALVAGAVIW. Topologically, residues 332–364 are cytoplasmic; sequence RKKRSGEKGRIYTQAASSDSAQGSDVSLTVPKV. S355 and S358 each carry phosphoserine.

The protein belongs to the MHC class I family. As to quaternary structure, heterodimer of an alpha chain and a beta chain (beta-2-microglobulin).

Its subcellular location is the membrane. Functionally, involved in the presentation of foreign antigens to the immune system. The protein is BOLA class I histocompatibility antigen, alpha chain BL3-7 of Bos taurus (Bovine).